Consider the following 443-residue polypeptide: Cyclin-A2-1 (443 aa).

Residues Met-1 to Asn-10 show a composition bias toward basic residues. Residues Met-1–Arg-61 are disordered. A compositionally biased stretch (basic and acidic residues) spans Ala-11–Asn-25.

It belongs to the cyclin family. Cyclin AB subfamily. In terms of tissue distribution, expressed in tissues with active cell division: apical root and shoot meristems, lateral root and leaf primordia, floral meristems and developing pollen.

May negatively regulate endocycles and act as a regulator of ploidy levels in endoreduplication. This chain is Cyclin-A2-1 (CYCA2-1), found in Arabidopsis thaliana (Mouse-ear cress).